Reading from the N-terminus, the 213-residue chain is Peptide methionine sulfoxide reductase MsrA (213 aa).

Cys-53 is a catalytic residue.

This sequence belongs to the MsrA Met sulfoxide reductase family.

The catalysed reaction is L-methionyl-[protein] + [thioredoxin]-disulfide + H2O = L-methionyl-(S)-S-oxide-[protein] + [thioredoxin]-dithiol. It catalyses the reaction [thioredoxin]-disulfide + L-methionine + H2O = L-methionine (S)-S-oxide + [thioredoxin]-dithiol. Its function is as follows. Has an important function as a repair enzyme for proteins that have been inactivated by oxidation. Catalyzes the reversible oxidation-reduction of methionine sulfoxide in proteins to methionine. In Serratia proteamaculans (strain 568), this protein is Peptide methionine sulfoxide reductase MsrA.